The chain runs to 123 residues: Large ribosomal subunit protein uL14 (123 aa).

The protein belongs to the universal ribosomal protein uL14 family. In terms of assembly, part of the 50S ribosomal subunit. Forms a cluster with proteins L3 and L19. In the 70S ribosome, L14 and L19 interact and together make contacts with the 16S rRNA in bridges B5 and B8.

Functionally, binds to 23S rRNA. Forms part of two intersubunit bridges in the 70S ribosome. The protein is Large ribosomal subunit protein uL14 of Sodalis glossinidius (strain morsitans).